A 380-amino-acid chain; its full sequence is Type 4 apparatus protein DotM (380 aa).

Transmembrane regions (helical) follow at residues 18-38 and 99-119; these read MAPV…WALA and YPVI…NVTL.

As to quaternary structure, the T4BSS is a complex nanomachine composed of several subcomplexes. This subunit is part of the Type IV Coupling Complex (T4CC), a subcomplex composed of the DotLMNYZ core and the IcmSW-LvgA adapter subunits, linked by the C-terminal tail of DotL. Six DotLMNYZ hetero-pentameric units may assemble into a hexameric nanomachine, forming an inner membrane channel for effectors to pass through. Interacts directly with DotL.

It is found in the cell inner membrane. Functionally, component of the Dot/Icm type IVB secretion system (T4BSS), which is used to inject bacterial effector proteins into eukaryotic host cells. Part of a subcomplex which recruits effector proteins and delivers them to the core transmembrane subcomplex. Forms the interacting surface for recruitment of acidic Glu-rich motif-containing effectors. The chain is Type 4 apparatus protein DotM from Legionella pneumophila subsp. pneumophila (strain Philadelphia 1 / ATCC 33152 / DSM 7513).